The sequence spans 454 residues: UPF0210 protein Mlab_1030 (454 aa).

The protein belongs to the UPF0210 family.

This Methanocorpusculum labreanum (strain ATCC 43576 / DSM 4855 / Z) protein is UPF0210 protein Mlab_1030.